The primary structure comprises 402 residues: Cysteine desulfurase NifS (402 aa).

Pyridoxal 5'-phosphate is bound by residues 72–73 (GT), asparagine 151, glutamine 179, and 199–201 (CGH). Position 202 is an N6-(pyridoxal phosphate)lysine (lysine 202). Threonine 237 is a pyridoxal 5'-phosphate binding site. Cysteine 325 serves as the catalytic Cysteine persulfide intermediate. Cysteine 325 provides a ligand contact to [2Fe-2S] cluster.

This sequence belongs to the class-V pyridoxal-phosphate-dependent aminotransferase family. NifS/IscS subfamily. In terms of assembly, homodimer. The cofactor is pyridoxal 5'-phosphate.

It carries out the reaction (sulfur carrier)-H + L-cysteine = (sulfur carrier)-SH + L-alanine. With respect to regulation, inhibited by equimolar concentrations of p-chloromercuribenzoic acid, iodoacetamide or N-ethylmaleimide. In terms of biological role, catalyzes the removal of elemental sulfur atoms from cysteine to produce alanine. Seems to participate in the biosynthesis of the nitrogenase metalloclusters by providing the inorganic sulfur required for the Fe-S core formation. The sequence is that of Cysteine desulfurase NifS from Azotobacter vinelandii.